Reading from the N-terminus, the 260-residue chain is Cytochrome c1-2, heme protein, mitochondrial (260 aa).

The transit peptide at 1–17 (IGAGVSGLLGFATVASA) directs the protein to the mitochondrion. At 18-221 (DEAEHGLECP…AAEPEMEERK (204 aa)) the chain is on the mitochondrial intermembrane side. The region spanning 43–150 (ASIRRGHQVY…NGQNYVFALL (108 aa)) is the Cytochrome c domain. Heme c contacts are provided by cysteine 56, cysteine 59, histidine 60, and methionine 179. The helical transmembrane segment at 222-241 (LMGFKWIFVLSLALLQAAYY) threads the bilayer. Residues 242–260 (RRLRWSVLKSRKLVLDVVN) are Mitochondrial matrix-facing.

It belongs to the cytochrome c family. Component of the ubiquinol-cytochrome c oxidoreductase (cytochrome b-c1 complex, complex III, CIII), a multisubunit enzyme composed of 3 respiratory subunits cytochrome b, cytochrome c1 and Rieske protein, 2 core protein subunits, and additional low-molecular weight protein subunits. The complex exists as an obligatory dimer and forms supercomplexes (SCs) in the inner mitochondrial membrane with cytochrome c oxidase (complex IV, CIV). Heme c is required as a cofactor. In terms of tissue distribution, in all tissues analyzed.

The protein resides in the mitochondrion inner membrane. The enzyme catalyses a quinol + 2 Fe(III)-[cytochrome c](out) = a quinone + 2 Fe(II)-[cytochrome c](out) + 2 H(+)(out). Functionally, component of the ubiquinol-cytochrome c oxidoreductase, a multisubunit transmembrane complex that is part of the mitochondrial electron transport chain which drives oxidative phosphorylation. The respiratory chain contains 3 multisubunit complexes succinate dehydrogenase (complex II, CII), ubiquinol-cytochrome c oxidoreductase (cytochrome b-c1 complex, complex III, CIII) and cytochrome c oxidase (complex IV, CIV), that cooperate to transfer electrons derived from NADH and succinate to molecular oxygen, creating an electrochemical gradient over the inner membrane that drives transmembrane transport and the ATP synthase. The cytochrome b-c1 complex catalyzes electron transfer from ubiquinol to cytochrome c, linking this redox reaction to translocation of protons across the mitochondrial inner membrane, with protons being carried across the membrane as hydrogens on the quinol. In the process called Q cycle, 2 protons are consumed from the matrix, 4 protons are released into the intermembrane space and 2 electrons are passed to cytochrome c. Cytochrome c1 is a catalytic core subunit containing a c-type heme. It transfers electrons from the [2Fe-2S] iron-sulfur cluster of the Rieske protein to cytochrome c. The protein is Cytochrome c1-2, heme protein, mitochondrial (CYCL) of Solanum tuberosum (Potato).